A 229-amino-acid chain; its full sequence is Orotate phosphoribosyltransferase (229 aa).

Residues Arg-107, Lys-108, Lys-111, His-113, and 133 to 141 (EDLTTAGGS) contribute to the 5-phospho-alpha-D-ribose 1-diphosphate site. Thr-137 serves as a coordination point for orotate.

The protein belongs to the purine/pyrimidine phosphoribosyltransferase family. PyrE subfamily. As to quaternary structure, homodimer. The cofactor is Mg(2+).

The enzyme catalyses orotidine 5'-phosphate + diphosphate = orotate + 5-phospho-alpha-D-ribose 1-diphosphate. The protein operates within pyrimidine metabolism; UMP biosynthesis via de novo pathway; UMP from orotate: step 1/2. In terms of biological role, catalyzes the transfer of a ribosyl phosphate group from 5-phosphoribose 1-diphosphate to orotate, leading to the formation of orotidine monophosphate (OMP). In Rhizobium etli (strain ATCC 51251 / DSM 11541 / JCM 21823 / NBRC 15573 / CFN 42), this protein is Orotate phosphoribosyltransferase.